The following is a 217-amino-acid chain: High frequency lysogenization protein HflD homolog (217 aa).

Belongs to the HflD family.

It is found in the cytoplasm. Its subcellular location is the cell membrane. The polypeptide is High frequency lysogenization protein HflD homolog (Buchnera aphidicola subsp. Baizongia pistaciae (strain Bp)).